A 180-amino-acid chain; its full sequence is NADH-quinone oxidoreductase subunit I (180 aa).

4Fe-4S ferredoxin-type domains are found at residues 50–80 and 90–119; these read LTRDPDGEERCVACNLCAVACPVGCISLQKT and EFFRINFSRCIFCGLCEEACPTTAIQLTPD. [4Fe-4S] cluster contacts are provided by C60, C63, C66, C70, C99, C102, C105, and C109.

It belongs to the complex I 23 kDa subunit family. In terms of assembly, NDH-1 is composed of 13 different subunits. Subunits NuoA, H, J, K, L, M, N constitute the membrane sector of the complex. Requires [4Fe-4S] cluster as cofactor.

The protein resides in the cell inner membrane. The catalysed reaction is a quinone + NADH + 5 H(+)(in) = a quinol + NAD(+) + 4 H(+)(out). Its function is as follows. NDH-1 shuttles electrons from NADH, via FMN and iron-sulfur (Fe-S) centers, to quinones in the respiratory chain. The immediate electron acceptor for the enzyme in this species is believed to be ubiquinone. Couples the redox reaction to proton translocation (for every two electrons transferred, four hydrogen ions are translocated across the cytoplasmic membrane), and thus conserves the redox energy in a proton gradient. The sequence is that of NADH-quinone oxidoreductase subunit I from Shigella dysenteriae serotype 1 (strain Sd197).